Here is a 310-residue protein sequence, read N- to C-terminus: Protease HtpX homolog (310 aa).

Transmembrane regions (helical) follow at residues 16–36 and 55–75; these read NAVLATYCVIFAFIGLLVDVI and IFPTITIIMFLVAFVIIVVCI. H166 serves as a coordination point for Zn(2+). E167 is an active-site residue. H170 contributes to the Zn(2+) binding site. 2 helical membrane-spanning segments follow: residues 182–202 and 214–234; these read VGILSNIMLLVANFSVYFFMG and MILLVLQIILPFLTLLLQMYL. Zn(2+) is bound at residue E239.

This sequence belongs to the peptidase M48B family. Zn(2+) is required as a cofactor.

It is found in the cell inner membrane. In Helicobacter pylori (strain Shi470), this protein is Protease HtpX homolog.